Here is a 378-residue protein sequence, read N- to C-terminus: Chaperone protein DnaJ 1 (378 aa).

The 65-residue stretch at 4–68 (DYYGILGVDR…DKRRIVDMGG (65 aa)) folds into the J domain. The CR-type zinc finger occupies 129 to 211 (GVKKDLTLDT…CAGDGRVRAR (83 aa)). The Zn(2+) site is built by Cys142, Cys145, Cys159, Cys162, Cys185, Cys188, Cys199, and Cys202. 4 CXXCXGXG motif repeats span residues 142 to 149 (CSKCHGSG), 159 to 166 (CGTCHGSG), 185 to 192 (CHTCNGTG), and 199 to 206 (CDECAGDG).

It belongs to the DnaJ family. As to quaternary structure, homodimer. Zn(2+) serves as cofactor.

The protein resides in the cytoplasm. Its function is as follows. Participates actively in the response to hyperosmotic and heat shock by preventing the aggregation of stress-denatured proteins and by disaggregating proteins, also in an autonomous, DnaK-independent fashion. Unfolded proteins bind initially to DnaJ; upon interaction with the DnaJ-bound protein, DnaK hydrolyzes its bound ATP, resulting in the formation of a stable complex. GrpE releases ADP from DnaK; ATP binding to DnaK triggers the release of the substrate protein, thus completing the reaction cycle. Several rounds of ATP-dependent interactions between DnaJ, DnaK and GrpE are required for fully efficient folding. Also involved, together with DnaK and GrpE, in the DNA replication of plasmids through activation of initiation proteins. This Corynebacterium efficiens (strain DSM 44549 / YS-314 / AJ 12310 / JCM 11189 / NBRC 100395) protein is Chaperone protein DnaJ 1.